We begin with the raw amino-acid sequence, 736 residues long: Dynamin-1-like protein (736 aa).

Position 1 is an N-acetylmethionine (methionine 1). In terms of domain architecture, Dynamin-type G spans 22 to 302 (IIQLPQIVVV…LMHHIRDCLP (281 aa)). The G1 motif stretch occupies residues 32 to 39 (GTQSSGKS). Residue 32 to 40 (GTQSSGKSS) participates in GTP binding. The G2 motif stretch occupies residues 58–60 (VTR). A G3 motif region spans residues 146–149 (DLPG). The G4 motif stretch occupies residues 215-218 (TKLD). GTP contacts are provided by residues 215 to 221 (TKLDLMD) and 246 to 249 (NRSQ). The G5 motif stretch occupies residues 245 to 248 (VNRS). The tract at residues 344–489 (YCNTIEGTAK…NEMVHNLVAI (146 aa)) is middle domain. The tract at residues 448–685 (NYSTQELLRF…NHVKDTLQSE (238 aa)) is interaction with GSK3B. Residues 502–569 (ADACGLMNNN…IQDNRRETKN (68 aa)) are b domain. The interval 522–554 (RELPSAGSRDKSSKVPSALAPASQEPPPAASAE) is disordered. Serine 529 is subject to Phosphoserine. Residues lysine 532, lysine 535, lysine 558, and lysine 568 each participate in a glycyl lysine isopeptide (Lys-Gly) (interchain with G-Cter in SUMO) cross-link. Residues 542 to 736 (PASQEPPPAA…IAEIRETHLW (195 aa)) form a C-terminal dimerization domain region. The disordered stretch occupies residues 566–588 (ETKNVPSAGGGIGDGGQEPTTGN). O-linked (GlcNAc) threonine glycans are attached at residues threonine 585 and threonine 586. Lysine 594 participates in a covalent cross-link: Glycyl lysine isopeptide (Lys-Gly) (interchain with G-Cter in SUMO). N6-acetyllysine; alternate is present on lysine 597. A Glycyl lysine isopeptide (Lys-Gly) (interchain with G-Cter in SUMO); alternate cross-link involves residue lysine 597. Residue lysine 606 forms a Glycyl lysine isopeptide (Lys-Gly) (interchain with G-Cter in SUMO) linkage. Residue serine 607 is modified to Phosphoserine. A Glycyl lysine isopeptide (Lys-Gly) (interchain with G-Cter in SUMO) cross-link involves residue lysine 608. Serine 616 carries the phosphoserine; by PINK1 modification. Serine 637 is modified (phosphoserine; by CAMK1 and PKA). Cysteine 644 is subject to S-nitrosocysteine. The 92-residue stretch at 644-735 (CEVIERLIKS…IIAEIRETHL (92 aa)) folds into the GED domain. Positions 654 to 668 (YFLIVRKNIQDSVPK) are important for homodimerization.

Belongs to the TRAFAC class dynamin-like GTPase superfamily. Dynamin/Fzo/YdjA family. As to quaternary structure, homotetramer; dimerizes through the N-terminal GTP-middle region of one molecule binding to the GED domain of another DNM1L molecule. Oligomerizes in a GTP-dependent manner to form membrane-associated tubules with a spiral pattern. Interacts with GSK3B and MARCHF5. Interacts (via the GTPase and B domains) with UBE2I; the interaction promotes sumoylation of DNM1L, mainly in its B domain. Interacts with PPP3CA; the interaction dephosphorylates DNM1L and regulates its transition to mitochondria. Interacts with BCL2L1 isoform BCL-X(L) and CLTA; DNM1L and BCL2L1 isoform BCL-X(L) may form a complex in synaptic vesicles that also contains clathrin and MFF. Interacts with MFF; the interaction is inhibited by C11orf65/MFI. Interacts with FIS1. Interacts with MIEF2 and MIEF1; GTP-dependent, regulates GTP hydrolysis and DNM1L oligomerization. Interacts with PGAM5; this interaction leads to dephosphorylation at Ser-656 and activation of GTPase activity and eventually to mitochondria fragmentation. Interacts with RALBP1; during mitosis, recruits DNM1L to the mitochondrion and mediates its activation by the mitotic kinase cyclin B-CDK1. Interacts with FUNDC1; this interaction recruits DNM1L/DRP1 at ER-mitochondria contact sites. In terms of processing, phosphorylation/dephosphorylation events on two sites near the GED domain regulate mitochondrial fission. Phosphorylation on Ser-637 inhibits mitochondrial fission probably through preventing intramolecular interaction. Dephosphorylated on this site by PPP3CA which promotes mitochondrial fission. Phosphorylation on Ser-616 by Pink1 activates the GTPase activity and promotes mitochondrial fission. Phosphorylated in a circadian manner at Ser-637. Dephosphorylated by PGAM5. Sumoylated on various lysine residues within the B domain, probably by MUL1. Sumoylation positively regulates mitochondrial fission. Desumoylated by SENP5 during G2/M transition of mitosis. Appears to be linked to its catalytic activity. Post-translationally, S-nitrosylation increases DNM1L dimerization, mitochondrial fission and causes neuronal damage. In terms of processing, O-GlcNAcylation augments the level of the GTP-bound active form of DNM1L and induces translocation from the cytoplasm to mitochondria in cardiomyocytes. It also decreases phosphorylation at Ser-637. Ubiquitination by MARCHF5 affects mitochondrial morphology. Expressed in the cerebellum and in several regions of the cerebrum and diencephalon. Strongly expressed in the cerebellar Purkinje cells and in the pontile giant neurons. As to expression, widely expressed. In terms of tissue distribution, brain-specific. Brain-specific (at protein level). Expressed in most of the subregions of the brain, including the cerebellum, midbrain, hippocampus, striatum, cerebral cortex, and brain stem. Weakly expressed in the olfactory bulb.

It localises to the cytoplasm. The protein resides in the cytosol. Its subcellular location is the golgi apparatus. It is found in the endomembrane system. The protein localises to the mitochondrion outer membrane. It localises to the peroxisome. The protein resides in the membrane. Its subcellular location is the clathrin-coated pit. It is found in the cytoplasmic vesicle. The protein localises to the secretory vesicle. It localises to the synaptic vesicle membrane. The protein resides in the lysosome. Its subcellular location is the late endosome. It is found in the cell membrane. The protein localises to the postsynaptic density. It catalyses the reaction GTP + H2O = GDP + phosphate + H(+). Its function is as follows. Functions in mitochondrial and peroxisomal division. Mediates membrane fission through oligomerization into membrane-associated tubular structures that wrap around the scission site to constrict and sever the mitochondrial membrane through a GTP hydrolysis-dependent mechanism. The specific recruitment at scission sites is mediated by membrane receptors like MFF, MIEF1 and MIEF2 for mitochondrial membranes. While the recruitment by the membrane receptors is GTP-dependent, the following hydrolysis of GTP induces the dissociation from the receptors and allows DNM1L filaments to curl into closed rings that are probably sufficient to sever a double membrane. Acts downstream of PINK1 to promote mitochondrial fission in a PRKN-dependent manner. Plays an important role in mitochondrial fission during mitosis. Required for formation of endocytic vesicles. Through its function in mitochondrial division, ensures the survival of at least some types of postmitotic neurons, including Purkinje cells, by suppressing oxidative damage. Required for normal brain development, including that of cerebellum. Facilitates developmentally regulated apoptosis during neural tube formation. Required for a normal rate of cytochrome c release and caspase activation during apoptosis; this requirement may depend upon the cell type and the physiological apoptotic cues. Proposed to regulate synaptic vesicle membrane dynamics through association with BCL2L1 isoform Bcl-X(L) which stimulates its GTPase activity in synaptic vesicles; the function may require its recruitment by MFF to clathrin-containing vesicles. Required for programmed necrosis execution. Rhythmic control of its activity following phosphorylation at Ser-637 is essential for the circadian control of mitochondrial ATP production. Functionally, regulates postsynaptic clathrin-mediated endocytosis by positioning the endocytic zone at the postsynaptic density, independently of mitochondrial division. The protein is Dynamin-1-like protein of Mus musculus (Mouse).